The sequence spans 496 residues: Lysine--tRNA ligase (496 aa).

Residues glutamate 409 and glutamate 416 each coordinate Mg(2+).

The protein belongs to the class-II aminoacyl-tRNA synthetase family. In terms of assembly, homodimer. Mg(2+) serves as cofactor.

Its subcellular location is the cytoplasm. The enzyme catalyses tRNA(Lys) + L-lysine + ATP = L-lysyl-tRNA(Lys) + AMP + diphosphate. The chain is Lysine--tRNA ligase from Streptococcus gordonii (strain Challis / ATCC 35105 / BCRC 15272 / CH1 / DL1 / V288).